The primary structure comprises 90 residues: Acylphosphatase (90 aa).

The region spanning 5 to 90 (CEKFVVSGIV…CREYQGFEIL (86 aa)) is the Acylphosphatase-like domain. Residues R20 and N38 contribute to the active site.

The protein belongs to the acylphosphatase family.

It carries out the reaction an acyl phosphate + H2O = a carboxylate + phosphate + H(+). This chain is Acylphosphatase (acyP), found in Vibrio vulnificus (strain CMCP6).